An 852-amino-acid chain; its full sequence is MPENLSSALETFKQQRNAAEAHYLKANRVSVFFREYTAAVETLLAALWAEHFQNSALCLMAVGGFGRGEPYPCSDVDLAVVSPAPLSDGIQEQIARFIQTLWDCKLMPSVKSGSVDELCESVRDDITGDTAFLEARFLFGNRQTADELAEKMNVQRNVAAFIEAKLVEMEHRHAKSQGSGAVLEPNIKSCPGGLRDIHTLLWIAKAQGLAANLPDLLKQRILTRAEAGMLSHGYRRLAHIRIRLHLNAKRAEDRLLFDLQPQVAESMGYQDENRRRQSEELMRVFYRAVKTVKQLGGILTPMLRSRVSSTPVRVTLRIDDDYIQVNNQIAARHTDIFFRRPEHIFKIVEIMQQRNDITALEPQTLRAWWGATRKINRSFYQNSENRRRFAGFFRSGNGLTQTLRFLNLYGVLGRYLPAWEKIVGLLQHDLFHIYPVDDHILAVVRNVRRLALDMHSHELPYASALMQSFEKQDILYLAAFFHDIAKGRGGDHAVQGIADARQFAADHFLTEEESDLLAWLVENHLLMSAVAQKEDIQDPGVLDAFCKRVQTHERLSALYLLTISDIRGTNPKLWNAWRASLLESLFHAAGRCLAGNDGNPHALFGRRRQEAADLLTRAAVPEKQQKKLWNALGSAYFARHQSREILWHAANLVHDFEPPIVRSRILPQSDSFQVMVFMPNGPRLFARLCRIFSRHGFDILAARAFITEHDYILDTFIVQIPSQHAPEDYPDIQSALEAELNSFIHGHTVAETQSCNRRISRRSRYMPIAPSITITPEEDYPDRYSVEITAVNRPFLLADMAEVFFAHNVSLRYAKISTLDERVEDSFTVFSPDLKNPKIQSSLKQALLEQLA.

The uridylyltransferase stretch occupies residues 1–318 (MPENLSSALE…STPVRVTLRI (318 aa)). The segment at 319 to 672 (DDDYIQVNNQ…SRILPQSDSF (354 aa)) is uridylyl-removing. The HD domain occupies 436-558 (VDDHILAVVR…VQTHERLSAL (123 aa)). ACT domains follow at residues 673–757 (QVMV…SCNR) and 785–852 (SVEI…EQLA).

Belongs to the GlnD family. Requires Mg(2+) as cofactor.

The catalysed reaction is [protein-PII]-L-tyrosine + UTP = [protein-PII]-uridylyl-L-tyrosine + diphosphate. It carries out the reaction [protein-PII]-uridylyl-L-tyrosine + H2O = [protein-PII]-L-tyrosine + UMP + H(+). Uridylyltransferase (UTase) activity is inhibited by glutamine, while glutamine activates uridylyl-removing (UR) activity. Modifies, by uridylylation and deuridylylation, the PII regulatory proteins (GlnB and homologs), in response to the nitrogen status of the cell that GlnD senses through the glutamine level. Under low glutamine levels, catalyzes the conversion of the PII proteins and UTP to PII-UMP and PPi, while under higher glutamine levels, GlnD hydrolyzes PII-UMP to PII and UMP (deuridylylation). Thus, controls uridylylation state and activity of the PII proteins, and plays an important role in the regulation of nitrogen assimilation and metabolism. This chain is Bifunctional uridylyltransferase/uridylyl-removing enzyme, found in Neisseria gonorrhoeae (strain ATCC 700825 / FA 1090).